The sequence spans 55 residues: Large ribosomal subunit protein bL33 (55 aa).

Belongs to the bacterial ribosomal protein bL33 family.

The polypeptide is Large ribosomal subunit protein bL33 (Buchnera aphidicola subsp. Baizongia pistaciae (strain Bp)).